The primary structure comprises 399 residues: F420-dependent formate dehydrogenase subunit beta (399 aa).

4Fe-4S ferredoxin-type domains are found at residues 287–307 (TEYM…EACP) and 339–367 (ERML…LAKI). Cys296, Cys299, Cys302, Cys306, Cys348, Cys351, Cys354, and Cys358 together coordinate [4Fe-4S] cluster.

This sequence belongs to the FrhB family. As to quaternary structure, dimer of an alpha (FdhA) and a beta (FdhB) subunit. [4Fe-4S] cluster is required as a cofactor. The cofactor is FAD. It depends on Zn(2+) as a cofactor.

It catalyses the reaction oxidized coenzyme F420-(gamma-L-Glu)(n) + formate + 2 H(+) = reduced coenzyme F420-(gamma-L-Glu)(n) + CO2. Its activity is regulated as follows. Is extremely sensitive to oxygen. Contains a FAD that is required for coenzyme F420-dependent activity but not for methyl viologen-dependent activity. Preincubation of the FAD-depleted enzyme with FAD restores coenzyme F420-dependent activity. Neither FMN nor FADH2 can replace FAD. Strongly inhibited by cyanide, azide, alpha,alpha-dipyridyl and 1,10-phenanthroline. Functionally, catalyzes the oxidation of formate to carbon dioxide, with coenzyme F420 as the electron acceptor. In vitro can also use methyl viologen, 7,8-didemethyl-8-hydroxy-5-deazariboflavin (or FO, a hydrolytic derivative of coenzyme F420), FMN and FAD as electron acceptors, but not NAD(+) or NADP(+). In Methanobacterium formicicum, this protein is F420-dependent formate dehydrogenase subunit beta.